A 374-amino-acid chain; its full sequence is o-succinylbenzoate synthase (374 aa).

The active-site Proton donor is K164. Mg(2+)-binding residues include D189, E214, and D239. The active-site Proton acceptor is K263.

It belongs to the mandelate racemase/muconate lactonizing enzyme family. MenC type 2 subfamily. In terms of assembly, homodimer. A divalent metal cation is required as a cofactor.

The catalysed reaction is (1R,6R)-6-hydroxy-2-succinyl-cyclohexa-2,4-diene-1-carboxylate = 2-succinylbenzoate + H2O. The protein operates within quinol/quinone metabolism; 1,4-dihydroxy-2-naphthoate biosynthesis; 1,4-dihydroxy-2-naphthoate from chorismate: step 4/7. It participates in quinol/quinone metabolism; menaquinone biosynthesis. Converts 2-succinyl-6-hydroxy-2,4-cyclohexadiene-1-carboxylate (SHCHC) to 2-succinylbenzoate (OSB). Also acts as a N-succinylamino acid racemase (NSAR) that catalyzes the racemization of N-succinyl-L-phenylglycine. L.innocua has the menaquinone synthesis pathway, indicating that the species requires OSBS activity. However, the NSAR/OSBS is not encoded in the menaquinone operon, raising the possibility that both NSAR and OSBS are biological functions. The protein is o-succinylbenzoate synthase of Listeria innocua serovar 6a (strain ATCC BAA-680 / CLIP 11262).